A 308-amino-acid chain; its full sequence is MSPSMSIEALDQPVKPVVFRPLTLRRRIKNSVATTFFFTSFVVALIPLVWLLWVVIARGWFAVTRSGWWTHSLRGVLPEQFAGGVYHALYGTLVQAGVAAVLAVPLGLMTAVYLVEYGTGRMSRVTTFTVDVLAGVPSIVAALFVFSLWIATLGFQQSAFAVALALVLLMLPVVVRAGEEMLRLVPDELREASYALGVPKWKTIVRIVAPIAMPGIVSGILLSIARVVGETAPVLVLVGYSHSINLDVFHGNMASLPLLIYTELTNPEHAGFLRVWGAALTLIIVVATINLAAAMIRFVATRRRRLPL.

Helical transmembrane passes span 36–56, 96–116, 132–152, 155–175, 204–224, and 276–296; these read FFFTSFVVALIPLVWLLWVVI, AGVAAVLAVPLGLMTAVYLVE, VLAGVPSIVAALFVFSLWIAT, FQQSAFAVALALVLLMLPVVV, IVRIVAPIAMPGIVSGILLSI, and WGAALTLIIVVATINLAAAMI. In terms of domain architecture, ABC transmembrane type-1 spans 89–297; that stretch reads LYGTLVQAGV…TINLAAAMIR (209 aa).

The protein belongs to the binding-protein-dependent transport system permease family. CysTW subfamily. As to quaternary structure, the complex is composed of two ATP-binding proteins (PstB), two transmembrane proteins (PstC and PstA) and a solute-binding protein (PstS).

The protein localises to the cell membrane. Its function is as follows. Part of the binding-protein-dependent transport system for phosphate; probably responsible for the translocation of the substrate across the membrane. The chain is Phosphate transport system permease protein PstA 1 (pstA1) from Mycobacterium tuberculosis (strain ATCC 25618 / H37Rv).